Here is a 90-residue protein sequence, read N- to C-terminus: Probable Fe(2+)-trafficking protein (90 aa).

The protein belongs to the Fe(2+)-trafficking protein family.

Its function is as follows. Could be a mediator in iron transactions between iron acquisition and iron-requiring processes, such as synthesis and/or repair of Fe-S clusters in biosynthetic enzymes. This is Probable Fe(2+)-trafficking protein from Saccharophagus degradans (strain 2-40 / ATCC 43961 / DSM 17024).